Here is a 185-residue protein sequence, read N- to C-terminus: Elongation factor P (185 aa).

It belongs to the elongation factor P family.

The protein resides in the cytoplasm. Its pathway is protein biosynthesis; polypeptide chain elongation. Involved in peptide bond synthesis. Stimulates efficient translation and peptide-bond synthesis on native or reconstituted 70S ribosomes in vitro. Probably functions indirectly by altering the affinity of the ribosome for aminoacyl-tRNA, thus increasing their reactivity as acceptors for peptidyl transferase. The polypeptide is Elongation factor P (Staphylococcus aureus (strain Mu3 / ATCC 700698)).